The sequence spans 134 residues: Replication enhancer protein (134 aa).

The protein belongs to the geminiviridae replication enhancer protein family. In terms of assembly, homooligomer. Interacts with the replication-associated protein (REP). Interacts with host proliferating cell nuclear antigen (PCNA). Interacts with host retinoblastoma-related protein 1 (RBR1), and may thereby deregulate the host cell cycle. Oligomerization and interaction with PCNA are necessary for optimal replication enhancement.

Increases viral DNA accumulation. Enhances infectivity and symptom expression. This is Replication enhancer protein from Cynanchum acutum (Tomato).